The chain runs to 162 residues: Protein A49R (162 aa).

The protein belongs to the poxviridae A49 protein family. Interacts with host BTRC; this interaction inhibits NF-kappa-B activation.

The protein resides in the host cytoplasm. It is found in the host nucleus. Its function is as follows. Plays a role in the inhibition of host NF-kappa-B activation. Interacts with host BTRC and thereby diminishes ubiquitination of NF-kappa-B inhibitor alpha/NFKBIA. This stabilizes NFKBIA and its interaction with NF-kappaB, so retaining p65/RELA in the cytoplasm and preventing NF-kappa-B-dependent gene expression. The polypeptide is Protein A49R (Bos taurus (Bovine)).